Here is a 454-residue protein sequence, read N- to C-terminus: Protein disulfide-isomerase TMX3 (454 aa).

Residues 1-24 form the signal peptide; the sequence is MAAWKSWTALRLCATVVVLDMVVC. Residues 25–128 form the Thioredoxin domain; the sequence is KGFVEDLDES…KDDIIEFAHR (104 aa). The Lumenal segment spans residues 25–375; that stretch reads KGFVEDLDES…TIVSIFKSSP (351 aa). Residues C53 and C56 each act as nucleophile in the active site. A disulfide bridge connects residues C53 and C56. Residues N258 and N313 are each glycosylated (N-linked (GlcNAc...) asparagine). Residues 376-396 traverse the membrane as a helical segment; that stretch reads LMGCFLFGLPLGVISIMCYGI. Residues 397-454 are Cytoplasmic-facing; that stretch reads YTADTDGGYIEERYEVSKSENENQEQIEESKEQQEPSSGGSVVPTVQEPKDVLEKKKD. Residues 412 to 454 are disordered; sequence VSKSENENQEQIEESKEQQEPSSGGSVVPTVQEPKDVLEKKKD. The segment covering 444-454 has biased composition (basic and acidic residues); the sequence is EPKDVLEKKKD. A Di-lysine motif motif is present at residues 451–454; that stretch reads KKKD.

Belongs to the protein disulfide isomerase family. Post-translationally, N-glycosylated. As to expression, widely expressed. Expressed in brain, testis, lung, skin, kidney, uterus, bone, stomach, liver, prostate, placenta, eye and muscle.

The protein localises to the endoplasmic reticulum membrane. It carries out the reaction Catalyzes the rearrangement of -S-S- bonds in proteins.. In terms of biological role, probable disulfide isomerase, which participates in the folding of proteins containing disulfide bonds. May act as a dithiol oxidase. Acts as a regulator of endoplasmic reticulum-mitochondria contact sites via its ability to regulate redox signals. This chain is Protein disulfide-isomerase TMX3 (TMX3), found in Homo sapiens (Human).